The sequence spans 478 residues: Membrane-bound lytic murein transglycosylase F (478 aa).

The N-terminal stretch at 1-22 is a signal peptide; the sequence is MTRFLFAIILGFLLTACQQVTV. Residues 23–257 are non-LT domain; it reads EETEYVPHKL…HLNEKYFGHV (235 aa). The interval 258–478 is LT domain; that stretch reads KRFDYIDTRA…PGTLSPDKPK (221 aa). The active site involves E302. The interval 446 to 478 is disordered; sequence SKQQNSDEEEPSDLASEDGPAPVPGTLSPDKPK. Residues 451–461 show a composition bias toward acidic residues; that stretch reads SDEEEPSDLAS.

The protein in the N-terminal section; belongs to the bacterial solute-binding protein 3 family. This sequence in the C-terminal section; belongs to the transglycosylase Slt family.

The protein localises to the cell outer membrane. The enzyme catalyses Exolytic cleavage of the (1-&gt;4)-beta-glycosidic linkage between N-acetylmuramic acid (MurNAc) and N-acetylglucosamine (GlcNAc) residues in peptidoglycan, from either the reducing or the non-reducing ends of the peptidoglycan chains, with concomitant formation of a 1,6-anhydrobond in the MurNAc residue.. In terms of biological role, murein-degrading enzyme that degrades murein glycan strands and insoluble, high-molecular weight murein sacculi, with the concomitant formation of a 1,6-anhydromuramoyl product. Lytic transglycosylases (LTs) play an integral role in the metabolism of the peptidoglycan (PG) sacculus. Their lytic action creates space within the PG sacculus to allow for its expansion as well as for the insertion of various structures such as secretion systems and flagella. The polypeptide is Membrane-bound lytic murein transglycosylase F (Shewanella sp. (strain ANA-3)).